The sequence spans 66 residues: Hemicalcin (66 aa).

The signal sequence occupies residues 1 to 21 (MRASLFIVIFVVSFITISCLS). A propeptide spanning residues 22–33 (TDDEEARWIEKR) is cleaved from the precursor. Intrachain disulfides connect C36-C50, C43-C54, and C49-C65. An essential for stimulation of [3H]ryanodine binding to RYR1 region spans residues 55–57 (KRR).

The protein belongs to the scorpion calcin family. In terms of tissue distribution, expressed by the venom gland.

It localises to the secreted. In terms of biological role, this toxin stabilizes ryanodine receptor 1 (RyR1) opening in a long-lasting subconductance state (20% and 38% of the full conductance state have been found). It promotes an increase in the opening probability at intermediate concentration. Furthermore, it triggers calcium release from sarcoplasmic vesicles (68 nM are enough to induce a sharp release, and 45% of the total calcium is released after toxin (100 nM) addition) probably by acting as a cell-penetrating peptide (CPP). In addition, it has been shown to dose-dependently stimulate ryanodine binding to RyR1 (EC(50)=6.9-71 nM). It also augments the bell-shaped calcium-[3H]ryanodine binding curve that is maximal at about 10 uM calcium concentration. It binds a different site as ryanodine. It acts synergistically with caffeine. In vivo, intracerebroventricular injection into mice induces neurotoxic symptoms, followed by death. The chain is Hemicalcin from Hemiscorpius lepturus (Scorpion).